Reading from the N-terminus, the 334-residue chain is tRNA uridine(34) hydroxylase (334 aa).

The Rhodanese domain maps to 123-217 (SDPDVILVDT…YLEEVKAEES (95 aa)). Catalysis depends on C177, which acts as the Cysteine persulfide intermediate.

This sequence belongs to the TrhO family.

It catalyses the reaction uridine(34) in tRNA + AH2 + O2 = 5-hydroxyuridine(34) in tRNA + A + H2O. Its function is as follows. Catalyzes oxygen-dependent 5-hydroxyuridine (ho5U) modification at position 34 in tRNAs. The polypeptide is tRNA uridine(34) hydroxylase (Shewanella baltica (strain OS223)).